A 486-amino-acid chain; its full sequence is Glutamate--tRNA ligase 1 (486 aa).

Residues 9 to 19 (PSPTGMLHIGG) carry the 'HIGH' region motif. A 'KMSKS' region motif is present at residues 259 to 263 (KLSKR). Residue Lys262 coordinates ATP.

The protein belongs to the class-I aminoacyl-tRNA synthetase family. Glutamate--tRNA ligase type 1 subfamily. In terms of assembly, monomer.

The protein resides in the cytoplasm. It carries out the reaction tRNA(Glu) + L-glutamate + ATP = L-glutamyl-tRNA(Glu) + AMP + diphosphate. Its function is as follows. Catalyzes the attachment of glutamate to tRNA(Glu) in a two-step reaction: glutamate is first activated by ATP to form Glu-AMP and then transferred to the acceptor end of tRNA(Glu). This is Glutamate--tRNA ligase 1 from Hyphomonas neptunium (strain ATCC 15444).